The primary structure comprises 335 residues: Glucokinase (335 aa).

11–16 serves as a coordination point for ATP; it reads ADIGGT.

The protein belongs to the bacterial glucokinase family.

The protein resides in the cytoplasm. The catalysed reaction is D-glucose + ATP = D-glucose 6-phosphate + ADP + H(+). The chain is Glucokinase from Xanthomonas campestris pv. campestris (strain 8004).